A 248-amino-acid chain; its full sequence is Ribonuclease PH (248 aa).

Residues arginine 86 and 124–126 (GTR) contribute to the phosphate site.

This sequence belongs to the RNase PH family. In terms of assembly, homohexameric ring arranged as a trimer of dimers.

It carries out the reaction tRNA(n+1) + phosphate = tRNA(n) + a ribonucleoside 5'-diphosphate. Functionally, phosphorolytic 3'-5' exoribonuclease that plays an important role in tRNA 3'-end maturation. Removes nucleotide residues following the 3'-CCA terminus of tRNAs; can also add nucleotides to the ends of RNA molecules by using nucleoside diphosphates as substrates, but this may not be physiologically important. Probably plays a role in initiation of 16S rRNA degradation (leading to ribosome degradation) during starvation. In Listeria monocytogenes serotype 4b (strain CLIP80459), this protein is Ribonuclease PH.